The sequence spans 222 residues: Thiopurine S-methyltransferase (222 aa).

Positions 10, 45, 66, and 123 each coordinate S-adenosyl-L-methionine.

Belongs to the class I-like SAM-binding methyltransferase superfamily. TPMT family.

The protein resides in the cytoplasm. The catalysed reaction is S-adenosyl-L-methionine + a thiopurine = S-adenosyl-L-homocysteine + a thiopurine S-methylether.. The protein is Thiopurine S-methyltransferase of Pseudomonas fluorescens (strain ATCC BAA-477 / NRRL B-23932 / Pf-5).